The sequence spans 429 residues: Enolase (429 aa).

Gln162 lines the (2R)-2-phosphoglycerate pocket. Glu204 acts as the Proton donor in catalysis. Asp241, Glu283, and Asp310 together coordinate Mg(2+). The (2R)-2-phosphoglycerate site is built by Lys335, Arg364, Ser365, and Lys386. Lys335 functions as the Proton acceptor in the catalytic mechanism.

This sequence belongs to the enolase family. Mg(2+) serves as cofactor.

The protein localises to the cytoplasm. It localises to the secreted. The protein resides in the cell surface. The catalysed reaction is (2R)-2-phosphoglycerate = phosphoenolpyruvate + H2O. The protein operates within carbohydrate degradation; glycolysis; pyruvate from D-glyceraldehyde 3-phosphate: step 4/5. Functionally, catalyzes the reversible conversion of 2-phosphoglycerate (2-PG) into phosphoenolpyruvate (PEP). It is essential for the degradation of carbohydrates via glycolysis. The chain is Enolase from Mycobacterium sp. (strain JLS).